The primary structure comprises 635 residues: Extracellular metalloproteinase 9 (635 aa).

The N-terminal stretch at 1-19 (MHGLLLAAGLLTLPLRALA) is a signal peptide. Positions 20-246 (HPGHQSTSIL…IHGVTDYVAD (227 aa)) are excised as a propeptide. N-linked (GlcNAc...) asparagine glycosylation occurs at Asn-274. A disordered region spans residues 279–307 (TWHSDGNTRYPTTRGNNGIAQDNPSGGTG). Asn-413 carries N-linked (GlcNAc...) asparagine glycosylation. His-430 is a Zn(2+) binding site. The active site involves Glu-431. His-434 contacts Zn(2+). An N-linked (GlcNAc...) asparagine glycan is attached at Asn-475.

Belongs to the peptidase M36 family. The cofactor is Zn(2+).

The protein resides in the secreted. In terms of biological role, secreted metalloproteinase that allows assimilation of proteinaceous substrates. The polypeptide is Extracellular metalloproteinase 9 (MEP9) (Uncinocarpus reesii (strain UAMH 1704)).